We begin with the raw amino-acid sequence, 562 residues long: Protein wntless (562 aa).

Residues 1–13 (MSGTILENLSGRK) lie on the Cytoplasmic side of the membrane. The chain crosses the membrane as a helical span at residues 14-34 (LSILVATLLLCQVLCFLLGGL). At 35–239 (YAPLPAGHVT…AIHQNGGFTQ (205 aa)) the chain is on the lumenal side. N58 is a glycosylation site (N-linked (GlcNAc...) asparagine). A helical membrane pass occupies residues 240-260 (IWLLLKTMLFPFVVGIMIWFW). At 261 to 270 (RRVHLLQRSP) the chain is on the cytoplasmic side. The chain crosses the membrane as a helical span at residues 271–291 (ALLEYMLIYLGAALTFLNLPL). Over 292–311 (EYLSLVYEMPYMLLLSDIRQ) the chain is Lumenal. A helical transmembrane segment spans residues 312–332 (GIFYAMLLTFWLVFAGEHMLI). Residues 333-344 (QDAPNKSTIRSR) are Cytoplasmic-facing. The chain crosses the membrane as a helical span at residues 345–365 (YWKHLSAVVVGCISLFVFDIC). At 366–390 (ERGVQLRNPFYSIWTTPLGAKVAMT) the chain is on the lumenal side. Residues 391-411 (FIVLAGVSAAIYFLFLCYMIW) traverse the membrane as a helical segment. The Cytoplasmic portion of the chain corresponds to 412-441 (KVFRNIGDKRTSLPSMSQARRLHYEGLIYR). A helical transmembrane segment spans residues 442–462 (FKFLMLATLVCAALTVAGFIM). Residues 463 to 482 (GQMAEGQWDWNDNVAIQPTS) are Lumenal-facing. A helical membrane pass occupies residues 483–503 (AFLTGVYGMWNIYIFALLILY). Over 504 to 562 (APSHKQWPAMHHSDETTQSNENIVASAASEEIEFSHLPSDSNPSEISSLTSFTRKVAFD) the chain is Cytoplasmic.

This sequence belongs to the wntless family. As to quaternary structure, interacts with wg; in the Golgi. Interacts with Vps35, a component of the retromer complex; wls stability is regulated by Vps35.

It localises to the presynaptic cell membrane. The protein resides in the postsynaptic cell membrane. Its subcellular location is the cell membrane. It is found in the endoplasmic reticulum membrane. The protein localises to the endosome membrane. It localises to the golgi apparatus membrane. Its function is as follows. A segment polarity gene required for wingless (wg)-dependent patterning processes, acting in both wg-sending cells and wg-target cells. In non-neuronal cells wls directs wg secretion. The wls traffic loop encompasses the Golgi, the cell surface, an endocytic compartment and a retrograde route leading back to the Golgi, and involves clathrin-mediated endocytosis and the retromer complex (a conserved protein complex consisting of Vps35 and Vps26). In neuronal cells (the larval motorneuron NMJ), the wg signal moves across the synapse via the release of wls-containing exosome-like vesicles. Postsynaptic wls is required for the trafficking of fz2 through the fz2-interacting protein Grip. In Drosophila sechellia (Fruit fly), this protein is Protein wntless.